Reading from the N-terminus, the 388-residue chain is Tumor protein p53-inducible protein 13 (388 aa).

The N-terminal stretch at 1 to 27 (MVPPPPPPSRLLLVALVGLLSLHEVVA) is a signal peptide. Topologically, residues 28–304 (EPAEEAGTRC…ARGPTPRTEE (277 aa)) are extracellular. The chain crosses the membrane as a helical span at residues 305–325 (AAWAAMALTFLLVLLTLATLC). Over 326–388 (TRLHRNFRRS…DSGPDSESSD (63 aa)) the chain is Cytoplasmic. Positions 361-372 (PSRRIKRSRRRP) are enriched in basic residues. Residues 361 to 388 (PSRRIKRSRRRPLLPPTPDSGPDSESSD) form a disordered region.

Its subcellular location is the cell membrane. It localises to the cytoplasm. Its function is as follows. May act as a tumor suppressor. Inhibits tumor cell growth, when overexpressed. The chain is Tumor protein p53-inducible protein 13 (Tp53i13) from Rattus norvegicus (Rat).